The sequence spans 752 residues: Glutamate carboxypeptidase 2 (752 aa).

Residues 1 to 22 lie on the Cytoplasmic side of the membrane; that stretch reads MWNALQDRDSAEVLGHRQRWLR. S10 carries the phosphoserine modification. The helical; Signal-anchor for type II membrane protein transmembrane segment at 23 to 44 threads the bilayer; sequence VGTLVLALTGTFLIGFLFGWFI. Residues 45–752 lie on the Extracellular side of the membrane; it reads KPSNEATGNV…AAAETLREVA (708 aa). N78, N123, and N155 each carry an N-linked (GlcNAc...) asparagine glycan. Substrate is bound by residues R212 and N259. 2 residues coordinate Ca(2+): T271 and Y274. Positions 276–589 are NAALADase; the sequence is ANEHAYRHEL…QVRGAMVFEL (314 aa). N338 is a glycosylation site (N-linked (GlcNAc...) asparagine). Residues H379 and D389 each contribute to the Zn(2+) site. Residue E426 coordinates substrate. E426 serves as the catalytic Nucleophile; for NAALADase activity. A Zn(2+)-binding site is contributed by E427. Ca(2+) is bound by residues E435 and E438. D455 provides a ligand contact to Zn(2+). N-linked (GlcNAc...) asparagine glycans are attached at residues N461 and N478. Residues 519-520, N521, 536-538, Y554, and 554-555 contribute to the substrate site; these read SG, RAR, and YH. Zn(2+) is bound at residue H555. The N-linked (GlcNAc...) asparagine glycan is linked to N615. The Charge relay system role is filled by S630. N640 carries N-linked (GlcNAc...) asparagine glycosylation. Active-site charge relay system residues include D668 and H691. 701–702 provides a ligand contact to substrate; the sequence is KY. N722 carries N-linked (GlcNAc...) asparagine glycosylation.

It belongs to the peptidase M28 family. M28B subfamily. In terms of assembly, homodimer. Zn(2+) is required as a cofactor. Expressed predominantly in the hippocampal region of the brain and in kidney. Lower levels in the ovary, testis and mandibular gland.

The protein resides in the cell membrane. The enzyme catalyses Release of an unsubstituted, C-terminal glutamyl residue, typically from Ac-Asp-Glu or folylpoly-gamma-glutamates.. Its activity is regulated as follows. The NAALADase and folate hydrolase activities are inhibited by quisqualic acid. Has both folate hydrolase and N-acetylated-alpha-linked-acidic dipeptidase (NAALADase) activity. Has a preference for tri-alpha-glutamate peptides. In the intestine, required for the uptake of folate. In the brain, modulates excitatory neurotransmission through the hydrolysis of the neuropeptide, N-aceylaspartylglutamate (NAAG), thereby releasing glutamate. Its function is as follows. Also exhibits a dipeptidyl-peptidase IV type activity. In vitro, cleaves Gly-Pro-AMC. The sequence is that of Glutamate carboxypeptidase 2 (Folh1) from Mus musculus (Mouse).